The following is a 203-amino-acid chain: CASP-like protein 2U5 (203 aa).

At 1–31 (MSEHRIPVAADKQISPPISAGEQKGCKGLKR) the chain is on the cytoplasmic side. A helical transmembrane segment spans residues 32 to 52 (TDLMLRFAAFVCCAVTMVVLI). Over 53-84 (TDKQTSAIQVPGFNNLTITKTVSFDLAKAFVY) the chain is Extracellular. An N-linked (GlcNAc...) asparagine glycan is attached at N67. Residues 85–105 (LVSAAGIGAGYTLLVLVLSII) traverse the membrane as a helical segment. Topologically, residues 106 to 111 (SAERSK) are cytoplasmic. The helical transmembrane segment at 112–132 (AIAWFIFVFDQLITYVLLAAA) threads the bilayer. Residues 133-164 (AASTEVAYMGAHAPPEASWLKVCSLFGRFCHQ) are Extracellular-facing. Residues 165–185 (LGASLVTSFISTVLFAFSAAI) traverse the membrane as a helical segment. The Cytoplasmic portion of the chain corresponds to 186–203 (SAYYLFSNTNVRPAYSKG).

Belongs to the Casparian strip membrane proteins (CASP) family. Homodimer and heterodimers.

The protein localises to the cell membrane. The sequence is that of CASP-like protein 2U5 from Selaginella moellendorffii (Spikemoss).